A 237-amino-acid chain; its full sequence is Uracil-DNA glycosylase (237 aa).

The active-site Proton acceptor is the aspartate 77.

It belongs to the uracil-DNA glycosylase (UDG) superfamily. UNG family.

The protein resides in the cytoplasm. It carries out the reaction Hydrolyzes single-stranded DNA or mismatched double-stranded DNA and polynucleotides, releasing free uracil.. Its function is as follows. Excises uracil residues from the DNA which can arise as a result of misincorporation of dUMP residues by DNA polymerase or due to deamination of cytosine. The polypeptide is Uracil-DNA glycosylase (Acinetobacter baumannii (strain SDF)).